The chain runs to 147 residues: Endoribonuclease YbeY (147 aa).

Zn(2+) contacts are provided by His-109, His-113, and His-119.

This sequence belongs to the endoribonuclease YbeY family. It depends on Zn(2+) as a cofactor.

It localises to the cytoplasm. Its function is as follows. Single strand-specific metallo-endoribonuclease involved in late-stage 70S ribosome quality control and in maturation of the 3' terminus of the 16S rRNA. The sequence is that of Endoribonuclease YbeY from Thiobacillus denitrificans (strain ATCC 25259 / T1).